The primary structure comprises 419 residues: UDP-N-acetylglucosamine 1-carboxyvinyltransferase 2 (419 aa).

24–25 (KN) is a binding site for phosphoenolpyruvate. R94 lines the UDP-N-acetyl-alpha-D-glucosamine pocket. The active-site Proton donor is C118. C118 bears the 2-(S-cysteinyl)pyruvic acid O-phosphothioketal mark. Residues 123 to 127 (RPIDQ), D307, and I329 contribute to the UDP-N-acetyl-alpha-D-glucosamine site.

The protein belongs to the EPSP synthase family. MurA subfamily.

Its subcellular location is the cytoplasm. The catalysed reaction is phosphoenolpyruvate + UDP-N-acetyl-alpha-D-glucosamine = UDP-N-acetyl-3-O-(1-carboxyvinyl)-alpha-D-glucosamine + phosphate. It functions in the pathway cell wall biogenesis; peptidoglycan biosynthesis. In terms of biological role, cell wall formation. Adds enolpyruvyl to UDP-N-acetylglucosamine. The sequence is that of UDP-N-acetylglucosamine 1-carboxyvinyltransferase 2 from Staphylococcus epidermidis (strain ATCC 35984 / DSM 28319 / BCRC 17069 / CCUG 31568 / BM 3577 / RP62A).